The sequence spans 505 residues: Chromosomal replication initiator protein DnaA (505 aa).

Residues 1–90 are domain I, interacts with DnaA modulators; sequence MSVELWQQCV…RRSSAPRAAP (90 aa). The segment at 91–168 is domain II; the sequence is NAPVSAAVAA…QVEGALKHTS (78 aa). The domain III, AAA+ region stretch occupies residues 169-385; the sequence is YLNRTFTFDT…GALKRVIAHS (217 aa). ATP is bound by residues Gly213, Gly215, Lys216, and Thr217. A domain IV, binds dsDNA region spans residues 386–505; the sequence is HFMGRDITIE…YKNLLRTLTT (120 aa).

It belongs to the DnaA family. In terms of assembly, oligomerizes as a right-handed, spiral filament on DNA at oriC.

It is found in the cytoplasm. Its function is as follows. Plays an essential role in the initiation and regulation of chromosomal replication. ATP-DnaA binds to the origin of replication (oriC) to initiate formation of the DNA replication initiation complex once per cell cycle. Binds the DnaA box (a 9 base pair repeat at the origin) and separates the double-stranded (ds)DNA. Forms a right-handed helical filament on oriC DNA; dsDNA binds to the exterior of the filament while single-stranded (ss)DNA is stabiized in the filament's interior. The ATP-DnaA-oriC complex binds and stabilizes one strand of the AT-rich DNA unwinding element (DUE), permitting loading of DNA polymerase. After initiation quickly degrades to an ADP-DnaA complex that is not apt for DNA replication. Binds acidic phospholipids. This Pseudomonas putida (strain ATCC 700007 / DSM 6899 / JCM 31910 / BCRC 17059 / LMG 24140 / F1) protein is Chromosomal replication initiator protein DnaA.